A 390-amino-acid polypeptide reads, in one-letter code: Probable tRNA pseudouridine synthase D (390 aa).

The active-site Nucleophile is the Asp-93. The TRUD domain occupies 166–353 (HVLNYFGIQR…YGTRRKLITP (188 aa)).

Belongs to the pseudouridine synthase TruD family.

The enzyme catalyses uridine(13) in tRNA = pseudouridine(13) in tRNA. Functionally, could be responsible for synthesis of pseudouridine from uracil-13 in transfer RNAs. The polypeptide is Probable tRNA pseudouridine synthase D (Methanococcus vannielii (strain ATCC 35089 / DSM 1224 / JCM 13029 / OCM 148 / SB)).